The following is a 100-amino-acid chain: Urease subunit gamma (100 aa).

The protein belongs to the urease gamma subunit family. As to quaternary structure, heterotrimer of UreA (gamma), UreB (beta) and UreC (alpha) subunits. Three heterotrimers associate to form the active enzyme.

It localises to the cytoplasm. The catalysed reaction is urea + 2 H2O + H(+) = hydrogencarbonate + 2 NH4(+). It functions in the pathway nitrogen metabolism; urea degradation; CO(2) and NH(3) from urea (urease route): step 1/1. This chain is Urease subunit gamma, found in Marinomonas sp. (strain MWYL1).